A 500-amino-acid chain; its full sequence is Cytochrome P450 71B37 (500 aa).

The helical transmembrane segment at 2 to 22 threads the bilayer; sequence ATIWFLPLLFLSCLLLAALRL. Heme is bound at residue Cys440.

This sequence belongs to the cytochrome P450 family. It depends on heme as a cofactor.

The protein resides in the membrane. The polypeptide is Cytochrome P450 71B37 (CYP71B37) (Arabidopsis thaliana (Mouse-ear cress)).